We begin with the raw amino-acid sequence, 483 residues long: Cysteine proteinase 1, mitochondrial (483 aa).

The transit peptide at Met-1–Met-30 directs the protein to the mitochondrion. Residues Cys-102, His-398, and Asn-421 contribute to the active site. Position 483 (Lys-483) is a propeptide, removed in mature form; by autocatalysis.

This sequence belongs to the peptidase C1 family. In terms of assembly, homohexamer. Binds to nucleic acids. Binds single-stranded DNA and RNA with higher affinity than double-stranded DNA. The N-terminus of isoform Cytoplasmic is blocked.

It localises to the mitochondrion. It is found in the cytoplasm. It carries out the reaction Inactivates bleomycin B2 (a cytotoxic glycometallopeptide) by hydrolysis of a carboxyamide bond of beta-aminoalanine, but also shows general aminopeptidase activity. The specificity varies somewhat with source, but amino acid arylamides of Met, Leu and Ala are preferred.. Its activity is regulated as follows. Inhibited by E64, a specific inhibitor of cysteine proteases, N-ethylmaleimide, iodacetamide, and mercury and zinc ions. In terms of biological role, the normal physiological role of the enzyme is unknown, but it is not essential for the viability of yeast cells. Has aminopeptidase activity, shortening substrate peptides sequentially by 1 amino acid. Has bleomycin hydrolase activity, which can protect the cell from the toxic effects of bleomycin. Has homocysteine-thiolactonase activity, protecting the cell against homocysteine toxicity. Acts as a repressor in the GAL4 regulatory system, but this does not require either the peptidase or nucleic acid-binding activities. This Saccharomyces cerevisiae (strain JAY291) (Baker's yeast) protein is Cysteine proteinase 1, mitochondrial (LAP3).